We begin with the raw amino-acid sequence, 496 residues long: Glycerol kinase (496 aa).

T11 provides a ligand contact to ADP. The ATP site is built by T11, T12, and S13. T11 provides a ligand contact to sn-glycerol 3-phosphate. Residue R15 coordinates ADP. Sn-glycerol 3-phosphate is bound by residues R81, E82, Y133, and D242. Glycerol contacts are provided by R81, E82, Y133, D242, and Q243. T264 and G307 together coordinate ADP. Residues T264, G307, Q311, and G408 each coordinate ATP. ADP-binding residues include G408 and N412.

Belongs to the FGGY kinase family.

The catalysed reaction is glycerol + ATP = sn-glycerol 3-phosphate + ADP + H(+). It participates in polyol metabolism; glycerol degradation via glycerol kinase pathway; sn-glycerol 3-phosphate from glycerol: step 1/1. With respect to regulation, inhibited by fructose 1,6-bisphosphate (FBP). In terms of biological role, key enzyme in the regulation of glycerol uptake and metabolism. Catalyzes the phosphorylation of glycerol to yield sn-glycerol 3-phosphate. In Trichlorobacter lovleyi (strain ATCC BAA-1151 / DSM 17278 / SZ) (Geobacter lovleyi), this protein is Glycerol kinase.